The sequence spans 305 residues: Pseudouridine-5'-phosphate glycosidase (305 aa).

Glu30 acts as the Proton donor in catalysis. Lys91 and Val111 together coordinate substrate. Asp143 is a Mn(2+) binding site. 145-147 (SAD) serves as a coordination point for substrate. Residue Lys164 is the Nucleophile of the active site.

It belongs to the pseudouridine-5'-phosphate glycosidase family. Homotrimer. Mn(2+) is required as a cofactor.

The enzyme catalyses D-ribose 5-phosphate + uracil = psi-UMP + H2O. Functionally, catalyzes the reversible cleavage of pseudouridine 5'-phosphate (PsiMP) to ribose 5-phosphate and uracil. Functions biologically in the cleavage direction, as part of a pseudouridine degradation pathway. This chain is Pseudouridine-5'-phosphate glycosidase, found in Mesorhizobium japonicum (strain LMG 29417 / CECT 9101 / MAFF 303099) (Mesorhizobium loti (strain MAFF 303099)).